A 396-amino-acid polypeptide reads, in one-letter code: Potassium channel subfamily K member 9 (396 aa).

The Cytoplasmic segment spans residues 1–8 (MKRQNVRT). The chain crosses the membrane as a helical span at residues 9 to 29 (LSLIACTFTYLLVGAAVFDAL). The Extracellular segment spans residues 30 to 88 (ESDHEMREEEKLKAEEVRLRGKYNISSDDYQQLELVILQSEPHRAGVQWKFAGSFYFAI). Asn53 is a glycosylation site (N-linked (GlcNAc...) asparagine). The segment at residues 89–101 (TVITTIGYGHAAP) is an intramembrane region (pore-forming). Residues Thr93, Ile94, Gly95, and Tyr96 each contribute to the K(+) site. The interval 93–98 (TIGYGH) is selectivity filter 1. At 102–107 (GTDAGK) the chain is on the extracellular side. The helical transmembrane segment at 108 to 128 (AFCMFYAVLGIPLTLVMFQSL) threads the bilayer. The Cytoplasmic segment spans residues 129-158 (GERMNTFVRYLLKRIKKCCGMRNTEVSMEN). The chain crosses the membrane as a helical span at residues 159–179 (MVTVGFFSCMGTLCLGAAAFS). Over 180–194 (QCEDWSFFHAYYYCF) the chain is Extracellular. The segment at residues 195–207 (ITLTTIGFGDFVA) is an intramembrane region (pore-forming). Residues Thr199, Ile200, Gly201, and Phe202 each contribute to the K(+) site. Residues 199-204 (TIGFGD) are selectivity filter 2. At 208 to 218 (LQSKGALQRKP) the chain is on the extracellular side. A helical transmembrane segment spans residues 219 to 239 (FYVAFSFMYILVGLTVIGAFL). The Cytoplasmic segment spans residues 240–396 (NLVVLRFLTM…HRLHIRRKSI (157 aa)). Positions 243–248 (VLRFLT) are X-gate.

The protein belongs to the two pore domain potassium channel (TC 1.A.1.8) family. As to quaternary structure, homodimer. Heterodimer with KCNK1. Heterodimer with KCNK3. Highly expressed in the CNS and at lower levels in the colon, kidney, liver, lung, spleen, stomach and skeletal muscle. The highest expression was found in the olfactory nuclei, piriform cortex, cerebellum, antedorsal thalmic nucleus, pontine nucleus, dorsal raphe and several nuclei in the medulla. Shows a non-homogeneous distribution in the hippocampus. Expressed at highest levels in the lateral posterior and inferior portions and at medium levels in neocortex. Expressed in motoneurons, including hypoglossal motoneurons (at protein level).

Its subcellular location is the cell membrane. It localises to the mitochondrion inner membrane. It is found in the cell projection. The protein localises to the dendrite. It catalyses the reaction K(+)(in) = K(+)(out). It carries out the reaction Na(+)(in) = Na(+)(out). With respect to regulation, activated by halothane and isoflurane. Inhibited by external acidification, diacylglycerol, anandamide and AGT/angiotensin II. Ruthenium red inhibits homomeric but not KCNK3:KCNK9 heteromeric channels. K(+) channel that conducts voltage-dependent outward rectifying currents upon membrane depolarization. Voltage sensing is coupled to K(+) electrochemical gradient in an 'ion flux gating' mode where outward but not inward ion flow opens the gate. Changes ion selectivity and becomes permeable to Na(+) ions in response to extracellular acidification. Protonation of the pH sensor His-98 stabilizes C-type inactivation conformation likely converting the channel from outward K(+)-conducting, to inward Na(+)-conducting to nonconductive state. Homo- and heterodimerizes to form functional channels with distinct regulatory and gating properties. Allows K(+) currents with fast-gating kinetics important for the repolarization and hyperpolarization phases of action potentials. In granule neurons, hyperpolarizes the resting membrane potential to limit intrinsic neuronal excitability, but once the action potential threshold is reached, supports high-frequency action potential firing and increased neuronal excitability. Homomeric and/or heteromeric KCNK3:KCNK9 channels operate in cerebellar granule cells, whereas heteromeric KCNK1:KCNK9 enables currents in hippocampal dentate gyrus granule neurons. Dispensable for central chemosensory respiration i.e. breathing controlled by brainstem CO2/pH, it rather conducts pH-sensitive currents and controls the firing rate of serotonergic raphe neurons involved in potentiation of the respiratory chemoreflex. In retinal ganglion cells, mediates outward rectifying currents that regulate action potentials in response to acidification of the synaptic cleft. Involved in transmission of image-forming and nonimage-forming visual information in the retina. In adrenal gland, contributes to the maintenance of a hyperpolarized resting membrane potential of aldosterone-producing cells at zona glomerulosa and limits aldosterone release as part of a regulatory mechanism that controls arterial blood pressure and electrolyte homeostasis. The chain is Potassium channel subfamily K member 9 from Rattus norvegicus (Rat).